We begin with the raw amino-acid sequence, 404 residues long: Caspase-1 (404 aa).

One can recognise a CARD domain in the interval 1–91 (MADKVLKEKR…HLAGVLELST (91 aa)). Positions 1–119 (MADKVLKEKR…PFPAPQTVQD (119 aa)) are excised as a propeptide. The segment at 111-132 (FPAPQTVQDNPVKPASSEPRGS) is disordered. Residues His237 and Cys285 contribute to the active site. A propeptide spanning residues 298–316 (SVGPSGNSSLLAAEDFEYD) is cleaved from the precursor. Phosphoserine is present on Ser302.

The protein belongs to the peptidase C14A family. As to quaternary structure, heterotetramer that consists of two anti-parallel arranged heterodimers, each one formed by a 20 kDa (Caspase-1 subunit p20) and a 10 kDa (Caspase-1 subunit p10) subunit. May be a component of the inflammasome, a protein complex which also includes PYCARD, CARD8 and NLRP2 and whose function would be the activation of pro-inflammatory caspases. Component of the AIM2 PANoptosome complex, a multiprotein complex that drives inflammatory cell death (PANoptosis). Both the p10 and p20 subunits interact with MEFV. Interacts with CARD17P/INCA and CARD18. Interacts with SERPINB1; this interaction regulates CASP1 activity. Heterotetramer that consists of two anti-parallel arranged heterodimers, each one formed by a 20 kDa (Caspase-1 subunit p20) and a 10 kDa (Caspase-1 subunit p10) subunit. The two subunits are derived from the precursor sequence by an autocatalytic mechanism. In terms of processing, ubiquitinated via 'Lys-11'-linked polyubiquitination. Deubiquitinated by USP8.

The protein localises to the cytoplasm. Its subcellular location is the cell membrane. The catalysed reaction is Strict requirement for an Asp residue at position P1 and has a preferred cleavage sequence of Tyr-Val-Ala-Asp-|-.. Thiol protease involved in a variety of inflammatory processes by proteolytically cleaving other proteins, such as the precursors of the inflammatory cytokines interleukin-1 beta (IL1B) and interleukin 18 (IL18) as well as the pyroptosis inducer Gasdermin-D (GSDMD), into active mature peptides. Plays a key role in cell immunity as an inflammatory response initiator: once activated through formation of an inflammasome complex, it initiates a pro-inflammatory response through the cleavage of the two inflammatory cytokines IL1B and IL18, releasing the mature cytokines which are involved in a variety of inflammatory processes. Cleaves a tetrapeptide after an Asp residue at position P1. Also initiates pyroptosis, a programmed lytic cell death pathway, through cleavage of GSDMD. In contrast to cleavage of interleukin IL1B, recognition and cleavage of GSDMD is not strictly dependent on the consensus cleavage site but depends on an exosite interface on CASP1 that recognizes and binds the Gasdermin-D, C-terminal (GSDMD-CT) part. Cleaves and activates CASP7 in response to bacterial infection, promoting plasma membrane repair. Upon inflammasome activation, during DNA virus infection but not RNA virus challenge, controls antiviral immunity through the cleavage of CGAS, rendering it inactive. In apoptotic cells, cleaves SPHK2 which is released from cells and remains enzymatically active extracellularly. The polypeptide is Caspase-1 (CASP1) (Sus scrofa (Pig)).